The primary structure comprises 157 residues: Transcription elongation factor GreA (157 aa).

The stretch at 47-75 forms a coiled coil; that stretch reads ENAEYDAAREKQGQIEDRITELENILSNA.

It belongs to the GreA/GreB family.

In terms of biological role, necessary for efficient RNA polymerase transcription elongation past template-encoded arresting sites. The arresting sites in DNA have the property of trapping a certain fraction of elongating RNA polymerases that pass through, resulting in locked ternary complexes. Cleavage of the nascent transcript by cleavage factors such as GreA or GreB allows the resumption of elongation from the new 3'terminus. GreA releases sequences of 2 to 3 nucleotides. This Mycoplasmopsis pulmonis (strain UAB CTIP) (Mycoplasma pulmonis) protein is Transcription elongation factor GreA.